Reading from the N-terminus, the 249-residue chain is Proteasome activator complex subunit 1 (249 aa).

The segment at 60–102 is disordered; that stretch reads PLDIPVPDPVKEKEKEERKKQQEKEEKDEKKKGDEDDKGPPCG. Over residues 68–98 the composition is skewed to basic and acidic residues; that stretch reads PVKEKEKEERKKQQEKEEKDEKKKGDEDDKG.

Belongs to the PA28 family. As to quaternary structure, heterodimer of PSME1 and PSME2, which forms a hexameric ring. PSME1 can form homoheptamers.

Its function is as follows. Implicated in immunoproteasome assembly and required for efficient antigen processing. The PA28 activator complex enhances the generation of class I binding peptides by altering the cleavage pattern of the proteasome. This is Proteasome activator complex subunit 1 (Psme1) from Rattus norvegicus (Rat).